The primary structure comprises 363 residues: D-alanine--D-alanine ligase (363 aa).

One can recognise an ATP-grasp domain in the interval 146–352; it reads KLCAADAGVA…FTALIDKLLH (207 aa). Position 179–234 (179–234) interacts with ATP; it reads DSTFGYPLFVKPASLGSSVGISKVHLPAALPEALKVACSYDRKILVEAAVSGKEIE. Residues aspartate 305, glutamate 319, and asparagine 321 each coordinate Mg(2+).

It belongs to the D-alanine--D-alanine ligase family. Requires Mg(2+) as cofactor. Mn(2+) serves as cofactor.

The protein localises to the cytoplasm. It catalyses the reaction 2 D-alanine + ATP = D-alanyl-D-alanine + ADP + phosphate + H(+). It participates in cell wall biogenesis; peptidoglycan biosynthesis. Its function is as follows. Cell wall formation. This Chlorobium limicola (strain DSM 245 / NBRC 103803 / 6330) protein is D-alanine--D-alanine ligase.